We begin with the raw amino-acid sequence, 334 residues long: MKKNQFLKESDVTAESVFFMKRRQVLKALGISATALSLPHAAHADLLSWFKGNDRPPAPAGKALEFSKPAAWQNNLPLTPADKVSGYNNFYEFGLDKADPAANAGSLKTDPWTLKISGEVAKPLTLDHDDLTRRFPLEERIYRMRCVEAWSMVVPWIGFPLHKLLALAEPTSNAKYVAFETIYAPEQMPGQQDRFIGGGLKYPYVEGLRLDEAMHPLTLMTVGVYGKALPPQNGAPVRLIVPWKYGFKGIKSIVSIKLTRERPPTTWNLAAPDEYGFYANVNPYVDHPRWSQATERFIGSGGILDVQRQPTLLFNGYADQVASLYRGLDLRENF.

A signal peptide (tat-type signal) is located at residues 1-44 (MKKNQFLKESDVTAESVFFMKRRQVLKALGISATALSLPHAAHA). Mo-molybdopterin contacts are provided by residues Asn88, 91-92 (YE), Cys146, Thr181, Asn233, Arg238, and 249-251 (GIK).

Belongs to the MsrP family. As to quaternary structure, heterodimer of a catalytic subunit (MsrP) and a heme-binding subunit (MsrQ). Requires Mo-molybdopterin as cofactor. Post-translationally, predicted to be exported by the Tat system. The position of the signal peptide cleavage has not been experimentally proven.

The protein localises to the periplasm. It catalyses the reaction L-methionyl-[protein] + a quinone + H2O = L-methionyl-(S)-S-oxide-[protein] + a quinol. The catalysed reaction is L-methionyl-[protein] + a quinone + H2O = L-methionyl-(R)-S-oxide-[protein] + a quinol. Its function is as follows. Part of the MsrPQ system that repairs oxidized periplasmic proteins containing methionine sulfoxide residues (Met-O), using respiratory chain electrons. Thus protects these proteins from oxidative-stress damage caused by reactive species of oxygen and chlorine generated by the host defense mechanisms. MsrPQ is essential for the maintenance of envelope integrity under bleach stress, rescuing a wide series of structurally unrelated periplasmic proteins from methionine oxidation, including the primary periplasmic chaperone SurA and the lipoprotein Pal. The catalytic subunit MsrP is non-stereospecific, being able to reduce both (R-) and (S-) diastereoisomers of methionine sulfoxide. The polypeptide is Protein-methionine-sulfoxide reductase catalytic subunit MsrP (Escherichia coli (strain K12 / MC4100 / BW2952)).